Here is a 350-residue protein sequence, read N- to C-terminus: Small ribosomal subunit biogenesis GTPase RsgA (350 aa).

Polar residues predominate over residues 1–17; sequence MSKNKLSKGQQRRVQAN. A disordered region spans residues 1-35; the sequence is MSKNKLSKGQQRRVQANHQRRLRTDRKPELDDSQL. The 171-residue stretch at 103 to 273 folds into the CP-type G domain; it reads TSVLTRPDLY…VIDSPGVREF (171 aa). GTP is bound by residues 159–162 and 213–221; these read NKID and GQSGVGKSS. Zn(2+) is bound by residues cysteine 297, cysteine 302, histidine 304, and cysteine 310.

Belongs to the TRAFAC class YlqF/YawG GTPase family. RsgA subfamily. As to quaternary structure, monomer. Associates with 30S ribosomal subunit, binds 16S rRNA. The cofactor is Zn(2+).

It is found in the cytoplasm. Functionally, one of several proteins that assist in the late maturation steps of the functional core of the 30S ribosomal subunit. Helps release RbfA from mature subunits. May play a role in the assembly of ribosomal proteins into the subunit. Circularly permuted GTPase that catalyzes slow GTP hydrolysis, GTPase activity is stimulated by the 30S ribosomal subunit. This chain is Small ribosomal subunit biogenesis GTPase RsgA, found in Yersinia pseudotuberculosis serotype O:1b (strain IP 31758).